A 1000-amino-acid chain; its full sequence is Receptor-type tyrosine-protein kinase FLT3 (1000 aa).

The N-terminal stretch at 1–27 is a signal peptide; the sequence is MRALAQRSDRRLLLLVVLSVMILETVT. Over 28-544 the chain is Extracellular; it reads NQDLPVIKCV…PFPFIQDNIS (517 aa). 2 cysteine pairs are disulfide-bonded: C36/C66 and C104/C115. The N-linked (GlcNAc...) asparagine glycan is linked to N44. A disordered region spans residues 45–67; sequence GSSAGKPSSYRMVRGSPEDLQCT. N-linked (GlcNAc...) asparagine glycans are attached at residues N133 and N152. 2 disulfide bridges follow: C200-C207 and C273-C331. The 91-residue stretch at 254–344 folds into the Ig-like C2-type domain; it reads PQSTLPQLFL…KHPSQSALVT (91 aa). N-linked (GlcNAc...) asparagine glycosylation is found at N307, N324, and N352. 2 cysteine pairs are disulfide-bonded: C369–C408 and C382–C393. 4 N-linked (GlcNAc...) asparagine glycosylation sites follow: N445, N474, N503, and N542. Residues 545-564 traverse the membrane as a helical segment; it reads FYATIGLCLPFIVVLIVLIC. Topologically, residues 565–992 are cytoplasmic; it reads HKYKKQFRYE…GSEPPSPQAQ (428 aa). The residue at position 573 (Y573) is a Phosphotyrosine. S575 bears the Phosphoserine mark. Phosphotyrosine; by autocatalysis occurs at positions 590 and 592. Positions 592-598 are important for normal regulation of the kinase activity and for maintaining the kinase in an inactive state in the absence of ligand binding; the sequence is YVDFRDY. Y600 is modified (phosphotyrosine). Residues 611–946 form the Protein kinase domain; the sequence is LEFGKVLGSG…PSFPNLTSFL (336 aa). Residues 617–625 and K645 contribute to the ATP site; that span reads LGSGAFGRV. The residue at position 727 (Y727) is a Phosphotyrosine; by autocatalysis. S760 is subject to Phosphoserine. Phosphotyrosine is present on residues Y769 and Y796. The active-site Proton acceptor is the D814. Y845 carries the post-translational modification Phosphotyrosine; by autocatalysis. Residues Y958 and Y972 each carry the phosphotyrosine modification. The tract at residues 968 to 1000 is disordered; that stretch reads HPSIYQNRRPLSREAGSEPPSPQAQVKIHRERS. Position 1000 is a phosphoserine (S1000).

It belongs to the protein kinase superfamily. Tyr protein kinase family. CSF-1/PDGF receptor subfamily. In terms of assembly, monomer in the absence of bound FLT3LG. Homodimer in the presence of bound FLT3LG. Interacts with FIZ1 following ligand activation. Interacts with FES, FER, LYN, FGR, HCK, SRC and GRB2. Interacts with PTPRJ/DEP-1 and PTPN11/SHP2. Interacts with RNF115 and RNF126. N-glycosylated, contains complex N-glycans with sialic acid. Post-translationally, autophosphorylated on several tyrosine residues in response to FLT3LG binding. FLT3LG binding also increases phosphorylation of mutant kinases that are constitutively activated. Dephosphorylated by PTPRJ/DEP-1, PTPN1, PTPN6/SHP-1, and to a lesser degree by PTPN12. Dephosphorylation is important for export from the endoplasmic reticulum and location at the cell membrane. In terms of processing, rapidly ubiquitinated by UBE2L6 and the E3 ubiquitin-protein ligase SIAH1 after autophosphorylation, leading to its proteasomal degradation. As to expression, hematopoietic stem and progenitor cell-enriched populations. Found in brain, placenta and testis.

It localises to the membrane. The protein localises to the endoplasmic reticulum lumen. The catalysed reaction is L-tyrosyl-[protein] + ATP = O-phospho-L-tyrosyl-[protein] + ADP + H(+). Present in an inactive conformation in the absence of bound ligand. FLT3LG binding leads to dimerization and activation by autophosphorylation. Its function is as follows. Tyrosine-protein kinase that acts as a cell-surface receptor for the cytokine FLT3LG and regulates differentiation, proliferation and survival of hematopoietic progenitor cells and of dendritic cells. Promotes phosphorylation of SHC1 and AKT1, and activation of the downstream effector MTOR. Promotes activation of RAS signaling and phosphorylation of downstream kinases, including MAPK1/ERK2 and/or MAPK3/ERK1. Promotes phosphorylation of FES, FER, PTPN6/SHP, PTPN11/SHP-2, PLCG1, and STAT5A and/or STAT5B. Activation of wild-type FLT3 causes only marginal activation of STAT5A or STAT5B. Mutations that cause constitutive kinase activity promote cell proliferation and resistance to apoptosis via the activation of multiple signaling pathways. The chain is Receptor-type tyrosine-protein kinase FLT3 (Flt3) from Mus musculus (Mouse).